The chain runs to 70 residues: Small ribosomal subunit protein bS21 (70 aa).

Residues lysine 40–tyrosine 70 are disordered. Basic residues predominate over residues arginine 45 to arginine 61.

It belongs to the bacterial ribosomal protein bS21 family.

This Bordetella parapertussis (strain 12822 / ATCC BAA-587 / NCTC 13253) protein is Small ribosomal subunit protein bS21.